A 131-amino-acid chain; its full sequence is Arsenate reductase (131 aa).

Catalysis depends on nucleophile residues C10, C82, and C89. 2 disulfide bridges follow: C10/C82 and C82/C89.

Belongs to the low molecular weight phosphotyrosine protein phosphatase family. Thioredoxin-coupled ArsC subfamily.

It localises to the cytoplasm. The catalysed reaction is arsenate + [thioredoxin]-dithiol + H(+) = arsenite + [thioredoxin]-disulfide + H2O. Its function is as follows. Catalyzes the reduction of arsenate [As(V)] to arsenite [As(III)]. The sequence is that of Arsenate reductase from Staphylococcus aureus (strain N315).